Consider the following 243-residue polypeptide: Ribonuclease 3 (243 aa).

The 137-residue stretch at Ile10–Gly146 folds into the RNase III domain. Residue Glu59 coordinates Mg(2+). The active site involves Asp63. Residues Asp132 and Glu135 each contribute to the Mg(2+) site. The active site involves Glu135. The 70-residue stretch at Asp172 to Gln241 folds into the DRBM domain. Positions Gly219–Ala231 are enriched in basic and acidic residues. The tract at residues Gly219–Lys243 is disordered.

Belongs to the ribonuclease III family. In terms of assembly, homodimer. It depends on Mg(2+) as a cofactor.

The protein localises to the cytoplasm. It carries out the reaction Endonucleolytic cleavage to 5'-phosphomonoester.. Functionally, digests double-stranded RNA. Involved in the processing of primary rRNA transcript to yield the immediate precursors to the large and small rRNAs (23S and 16S). Processes some mRNAs, and tRNAs when they are encoded in the rRNA operon. Processes pre-crRNA and tracrRNA of type II CRISPR loci if present in the organism. The polypeptide is Ribonuclease 3 (Staphylococcus aureus (strain bovine RF122 / ET3-1)).